The sequence spans 355 residues: G protein alpha i subunit (355 aa).

The N-myristoyl glycine moiety is linked to residue G2. Residue C3 is the site of S-palmitoyl cysteine attachment. Residues 33–355 form the G-alpha domain; that stretch reads SEVKLLLLGA…KNNLKQIGLF (323 aa). The segment at 36 to 49 is G1 motif; that stretch reads KLLLLGAGESGKST. GTP is bound by residues 41–48, 176–182, 201–205, 270–273, and A327; these read GAGESGKS, LRTRVKT, DVGGQ, and NKKD. Mg(2+) is bound by residues S48 and T182. Positions 174-182 are G2 motif; that stretch reads DVLRTRVKT. Residues 197 to 206 are G3 motif; the sequence is FKLFDVGGQR. A G4 motif region spans residues 266–273; the sequence is ILFLNKKD. The interval 325–330 is G5 motif; the sequence is TCATDT.

This sequence belongs to the G-alpha family. G(i/o/t/z) subfamily. As to quaternary structure, g proteins are composed of 3 units; alpha, beta and gamma. The alpha chain contains the guanine nucleotide binding site. Interacts (via GDP- or GTP-bound forms) with loco (via GoLoco and RGS domains). Interacts with raps/pins.

It is found in the cell membrane. It localises to the apical cell membrane. Functionally, guanine nucleotide-binding proteins (G proteins) are involved as modulators or transducers in various transmembrane signaling systems. Plays a role in glial cell differentiation during embryogenesis; loco, Galphao and the G-protein coupled receptor, moody, are required in the surface glia to achieve effective insulation of the nerve cord. This is G protein alpha i subunit (Galphai) from Drosophila melanogaster (Fruit fly).